The following is an 83-amino-acid chain: MSVRIRLKRMGAKKRPYYRIVVMDSSSPRDGRAIEELGYYHPVERQNQVKINKNKFQEWVDKGAIPSDTVKRILNKSNFKVDN.

It belongs to the bacterial ribosomal protein bS16 family.

This chain is Small ribosomal subunit protein bS16, found in Borrelia duttonii (strain Ly).